The following is an 843-amino-acid chain: MPLSYPHFRKLLLLDDEAGPLEEELPRLADEGLNRRVAEDLNLQLPNVSIPWTHKVGNFTGLYSSTVPAFNPNWLTPSFPDIHLHQDMISKCEQFVGPLTKNELRRLKLVMPARFYPKHTKYFLLEKGIKPYYPDQAVNHYFQTRHYLHTLWKAGILYKRETTRSASFCGSQYSWEQELQHGSTSLNDKKGHGTESFCAQSTGLLARPSAGSAIQSKFQQSRLGLQHKQGQLANGKQGRSGRLRSRVHTPTRWPAGVEPSGTGCFNNLASRSASCFHQSAVREEANPSLSTSKRHTSSGHAVELNSLPPSSVGSQGKGTVFSCWWLQFRNTEPCSDYCLSHIINLLEDWGPCYEHGEHHIRTPRTPARVTGGVFLVDKNPHNTTESRLVVDFSQFSRGTTQVSWPKFAVPNLQSLTNLLSSNLSWLSLDVSAAFYHLPLHPAAMPHLLVGSSGLPRYVARLSSTSRIHDHQHGTMQNLHSSCSRNLYVSLLLLFQTLGRKLHLYSHPIILGFRKIPMGVGLSPFLLAQFTSAICSVVRRAFPHCLAFSYMDDLVLGAKSVQHLESLYTAVTNFLLSVGIHLNTAKTKRWGYNLHFMGYVIGSWGTLPQDHIVHKIKDCFRKVPVNRPIDWKVCQSIVGLLGFAAPFTQCGYPALMPLYACITAKQAFVFSPTYKAFLCKQYMNLYPVARQRPGLCQVFADATPTGWGLAIGHQRMRGTFVAPLPIHTAELLAACFARSRSGAILIGTDNSVVLSRKYTSFPWLLGCAANWILRGTSFVYVPSALNPADEPSRGRLGLYRPLLRLPFQPTTGRTSLYADSPSVPSHLPDRVHFASPLHVAWRPP.

Residues 1–177 form a terminal protein domain (TP) region; sequence MPLSYPHFRK…FCGSQYSWEQ (177 aa). Residues 178 to 346 form a spacer region; the sequence is ELQHGSTSLN…YCLSHIINLL (169 aa). Disordered regions lie at residues 228-255 and 284-314; these read KQGQ…RWPA and EANP…SVGS. The segment covering 239 to 249 has biased composition (basic residues); the sequence is RSGRLRSRVHT. The polymerase/reverse transcriptase domain (RT) stretch occupies residues 347–690; that stretch reads EDWGPCYEHG…YMNLYPVARQ (344 aa). Residues 357-600 form the Reverse transcriptase domain; that stretch reads EHHIRTPRTP…YNLHFMGYVI (244 aa). 3 residues coordinate Mg(2+): Asp-429, Asp-551, and Asp-552.

The protein belongs to the hepadnaviridae P protein family.

It carries out the reaction DNA(n) + a 2'-deoxyribonucleoside 5'-triphosphate = DNA(n+1) + diphosphate. The catalysed reaction is Endonucleolytic cleavage to 5'-phosphomonoester.. With respect to regulation, activated by host HSP70 and HSP40 in vitro to be able to bind the epsilon loop of the pgRNA. Because deletion of the RNase H region renders the protein partly chaperone-independent, the chaperones may be needed indirectly to relieve occlusion of the RNA-binding site by this domain. Inhibited by several reverse-transcriptase inhibitors: Lamivudine, Adefovir and Entecavir. In terms of biological role, multifunctional enzyme that converts the viral RNA genome into dsDNA in viral cytoplasmic capsids. This enzyme displays a DNA polymerase activity that can copy either DNA or RNA templates, and a ribonuclease H (RNase H) activity that cleaves the RNA strand of RNA-DNA heteroduplexes in a partially processive 3'- to 5'-endonucleasic mode. Neo-synthesized pregenomic RNA (pgRNA) are encapsidated together with the P protein, and reverse-transcribed inside the nucleocapsid. Initiation of reverse-transcription occurs first by binding the epsilon loop on the pgRNA genome, and is initiated by protein priming, thereby the 5'-end of (-)DNA is covalently linked to P protein. Partial (+)DNA is synthesized from the (-)DNA template and generates the relaxed circular DNA (RC-DNA) genome. After budding and infection, the RC-DNA migrates in the nucleus, and is converted into a plasmid-like covalently closed circular DNA (cccDNA). The activity of P protein does not seem to be necessary for cccDNA generation, and is presumably released from (+)DNA by host nuclear DNA repair machinery. This Hepatitis B virus genotype F2 subtype adw4q (isolate Senegal/9203) (HBV-F) protein is Protein P.